A 549-amino-acid chain; its full sequence is Cation/acetate symporter ActP (549 aa).

13 consecutive transmembrane segments (helical) span residues 33–53, 77–97, 103–123, 148–168, 183–203, 206–226, 262–282, 303–323, 355–375, 404–424, 428–448, 464–484, and 493–513; these read WQAI…TYWA, LAIA…ALVF, GLIY…LIAE, ILSA…QMVG, IAVV…GMLA, WVQI…AFMV, ISAL…PHIL, GFMG…IMLV, LFLG…VAGL, VSKI…VLFE, IAFM…PIIL, GGWL…TIWV, and IFPY…GIWF.

The protein belongs to the sodium:solute symporter (SSF) (TC 2.A.21) family.

It is found in the cell inner membrane. In terms of biological role, transports acetate. In Escherichia fergusonii (strain ATCC 35469 / DSM 13698 / CCUG 18766 / IAM 14443 / JCM 21226 / LMG 7866 / NBRC 102419 / NCTC 12128 / CDC 0568-73), this protein is Cation/acetate symporter ActP.